The sequence spans 378 residues: Heat-inducible transcription repressor HrcA (378 aa).

Belongs to the HrcA family.

In terms of biological role, negative regulator of class I heat shock genes (grpE-dnaK-dnaJ and groELS operons). Prevents heat-shock induction of these operons. The chain is Heat-inducible transcription repressor HrcA from Synechocystis sp. (strain ATCC 27184 / PCC 6803 / Kazusa).